The primary structure comprises 245 residues: MKKILAEIAYDGSLYHGFQIQPTKPTIQGEIEKALEKINKTKVKIQSAGRTDKGVHAKRQIISFYIKININLKNLKTAINSLLKNDIRIIKLKYVSNEFQPRFHAKKRKYTYYILNNENHYPWEEYQAYYVRKKLNINRLNTMAEMLIGLHDFTTFSCIRDQTNSKLKEIYLAKFKKKNKFIVFEIIGSSFLWKMVRSIVGTMIDIEIKNESVDTFIKILKSKNRKYARTTAPAKALFLDRVFYE.

Asp-52 acts as the Nucleophile in catalysis. Tyr-110 provides a ligand contact to substrate.

This sequence belongs to the tRNA pseudouridine synthase TruA family. As to quaternary structure, homodimer.

The catalysed reaction is uridine(38/39/40) in tRNA = pseudouridine(38/39/40) in tRNA. Formation of pseudouridine at positions 38, 39 and 40 in the anticodon stem and loop of transfer RNAs. The polypeptide is tRNA pseudouridine synthase A (Borrelia duttonii (strain Ly)).